We begin with the raw amino-acid sequence, 457 residues long: Angiopoietin-related protein 6 (457 aa).

The signal sequence occupies residues 1–24; sequence MGTARLRKLQLLLLLGAWRALGGA. 2 coiled-coil regions span residues 51–77 and 126–164; these read DSEL…RAAE and LLAE…QHSS. The interval 201–235 is disordered; that stretch reads SNTSRRLDQTPEHQREQSLRQQGPPSSLLPTGHLA. An N-linked (GlcNAc...) asparagine glycan is attached at Asn-202. Over residues 205 to 218 the composition is skewed to basic and acidic residues; it reads RRLDQTPEHQREQS. Residues 219–229 are compositionally biased toward polar residues; that stretch reads LRQQGPPSSLL. Residues 238-456 enclose the Fibrinogen C-terminal domain; sequence TRPVGPWRDC…KAVMLTRLVR (219 aa). Disulfide bonds link Cys-247-Cys-274 and Cys-397-Cys-410.

As to expression, highly expressed in the liver, specifically in hepatocytes, and weakly in the heart. Expressed in hematopoietic cells, platelets and mast cells, and detected at wounded skin.

Its subcellular location is the secreted. Functionally, may play a role in the wound healing process. May promote epidermal proliferation, remodeling and regeneration. May promote the chemotactic activity of endothelial cells and induce neovascularization. May counteract high-fat diet-induced obesity and related insulin resistance through increased energy expenditure. This Mus musculus (Mouse) protein is Angiopoietin-related protein 6 (Angptl6).